The sequence spans 154 residues: Transcriptional repressor NrdR (154 aa).

A zinc finger lies at 3–34 (CPFCGANDTKVIDSRLVAEGEQVRRRRECLAC). The ATP-cone domain maps to 49–139 (PRLIKQDGSR…VYRRFQDLNE (91 aa)).

This sequence belongs to the NrdR family. Zn(2+) is required as a cofactor.

In terms of biological role, negatively regulates transcription of bacterial ribonucleotide reductase nrd genes and operons by binding to NrdR-boxes. The sequence is that of Transcriptional repressor NrdR from Pseudomonas syringae pv. tomato (strain ATCC BAA-871 / DC3000).